Reading from the N-terminus, the 117-residue chain is Large ribosomal subunit protein bL20c (117 aa).

Belongs to the bacterial ribosomal protein bL20 family.

It localises to the plastid. It is found in the chloroplast. In terms of biological role, binds directly to 23S ribosomal RNA and is necessary for the in vitro assembly process of the 50S ribosomal subunit. It is not involved in the protein synthesizing functions of that subunit. This chain is Large ribosomal subunit protein bL20c (rpl20), found in Bigelowiella natans (Pedinomonas minutissima).